Consider the following 177-residue polypeptide: NADH-quinone oxidoreductase subunit B (177 aa).

[4Fe-4S] cluster-binding residues include Cys-56, Cys-57, Cys-121, and Cys-151.

This sequence belongs to the complex I 20 kDa subunit family. In terms of assembly, NDH-1 is composed of 14 different subunits. Subunits NuoB, C, D, E, F, and G constitute the peripheral sector of the complex. [4Fe-4S] cluster is required as a cofactor.

The protein resides in the cell inner membrane. It catalyses the reaction a quinone + NADH + 5 H(+)(in) = a quinol + NAD(+) + 4 H(+)(out). NDH-1 shuttles electrons from NADH, via FMN and iron-sulfur (Fe-S) centers, to quinones in the respiratory chain. Couples the redox reaction to proton translocation (for every two electrons transferred, four hydrogen ions are translocated across the cytoplasmic membrane), and thus conserves the redox energy in a proton gradient. The polypeptide is NADH-quinone oxidoreductase subunit B (Ruegeria pomeroyi (strain ATCC 700808 / DSM 15171 / DSS-3) (Silicibacter pomeroyi)).